A 428-amino-acid chain; its full sequence is GTPase Obg (428 aa).

One can recognise an Obg domain in the interval 1 to 158 (MFVDQVKIYV…RDVILELKVL (158 aa)). In terms of domain architecture, OBG-type G spans 159 to 329 (ADVGLVGFPS…LLFEVANLIE (171 aa)). Residues 165–172 (GFPSVGKS), 190–194 (FTTIV), 212–215 (DLPG), 282–285 (NKMD), and 310–312 (SAV) each bind GTP. Ser-172 and Thr-192 together coordinate Mg(2+). In terms of domain architecture, OCT spans 350–428 (KFDTEGVKFE…ILEYEFEFID (79 aa)).

This sequence belongs to the TRAFAC class OBG-HflX-like GTPase superfamily. OBG GTPase family. Monomer. It depends on Mg(2+) as a cofactor.

The protein resides in the cytoplasm. Its function is as follows. An essential GTPase which binds GTP, GDP and possibly (p)ppGpp with moderate affinity, with high nucleotide exchange rates and a fairly low GTP hydrolysis rate. Plays a role in control of the cell cycle, stress response, ribosome biogenesis and in those bacteria that undergo differentiation, in morphogenesis control. In Bacillus cereus (strain ATCC 14579 / DSM 31 / CCUG 7414 / JCM 2152 / NBRC 15305 / NCIMB 9373 / NCTC 2599 / NRRL B-3711), this protein is GTPase Obg.